A 680-amino-acid polypeptide reads, in one-letter code: UvrABC system protein B (680 aa).

Residues 27-192 enclose the Helicase ATP-binding domain; that stretch reads SNIEAGVTDQ…ERNDYDFHRG (166 aa). 40-47 lines the ATP pocket; sequence GVTGSGKT. The short motif at 93–116 is the Beta-hairpin element; the sequence is YYDYYQPEAYVPSSDTYIEKDSSI. Residues 432 to 594 enclose the Helicase C-terminal domain; that stretch reads QVDDLLGECR…IVPATIRKAV (163 aa). The 36-residue stretch at 637–672 folds into the UVR domain; that stretch reads AKQIQQLERDMREAAKELEFERAAELRDRIRLLREH.

The protein belongs to the UvrB family. In terms of assembly, forms a heterotetramer with UvrA during the search for lesions. Interacts with UvrC in an incision complex.

It is found in the cytoplasm. The UvrABC repair system catalyzes the recognition and processing of DNA lesions. A damage recognition complex composed of 2 UvrA and 2 UvrB subunits scans DNA for abnormalities. Upon binding of the UvrA(2)B(2) complex to a putative damaged site, the DNA wraps around one UvrB monomer. DNA wrap is dependent on ATP binding by UvrB and probably causes local melting of the DNA helix, facilitating insertion of UvrB beta-hairpin between the DNA strands. Then UvrB probes one DNA strand for the presence of a lesion. If a lesion is found the UvrA subunits dissociate and the UvrB-DNA preincision complex is formed. This complex is subsequently bound by UvrC and the second UvrB is released. If no lesion is found, the DNA wraps around the other UvrB subunit that will check the other stand for damage. This chain is UvrABC system protein B, found in Nitratidesulfovibrio vulgaris (strain DSM 19637 / Miyazaki F) (Desulfovibrio vulgaris).